The chain runs to 349 residues: Hydroxymethylglutaryl-CoA synthase (349 aa).

Residues Asp-29 and Ala-30 each contribute to the (3S)-3-hydroxy-3-methylglutaryl-CoA site. The active-site Proton donor/acceptor is Glu-81. 2 residues coordinate (3S)-3-hydroxy-3-methylglutaryl-CoA: Cys-113 and Thr-154. Residue Cys-113 is the Acyl-thioester intermediate of the active site. Arg-202 is a binding site for CoA. Positions 204 and 237 each coordinate (3S)-3-hydroxy-3-methylglutaryl-CoA. The Proton donor/acceptor role is filled by His-237. Lys-242 is a binding site for CoA. 3 residues coordinate (3S)-3-hydroxy-3-methylglutaryl-CoA: Arg-246, Asn-269, and Ser-299.

Belongs to the thiolase-like superfamily. Archaeal HMG-CoA synthase family. As to quaternary structure, interacts with acetoacetyl-CoA thiolase that catalyzes the precedent step in the pathway and with a DUF35 protein. The acetoacetyl-CoA thiolase/HMG-CoA synthase complex channels the intermediate via a fused CoA-binding site, which allows for efficient coupling of the endergonic thiolase reaction with the exergonic HMGCS reaction.

The enzyme catalyses acetoacetyl-CoA + acetyl-CoA + H2O = (3S)-3-hydroxy-3-methylglutaryl-CoA + CoA + H(+). The protein operates within metabolic intermediate biosynthesis; (R)-mevalonate biosynthesis; (R)-mevalonate from acetyl-CoA: step 2/3. In terms of biological role, catalyzes the condensation of acetyl-CoA with acetoacetyl-CoA to form 3-hydroxy-3-methylglutaryl-CoA (HMG-CoA). Functions in the mevalonate (MVA) pathway leading to isopentenyl diphosphate (IPP), a key precursor for the biosynthesis of isoprenoid compounds that are building blocks of archaeal membrane lipids. The polypeptide is Hydroxymethylglutaryl-CoA synthase (Methanococcoides burtonii (strain DSM 6242 / NBRC 107633 / OCM 468 / ACE-M)).